Here is a 553-residue protein sequence, read N- to C-terminus: Transmembrane protein DDB_G0292058 (553 aa).

An N-terminal signal peptide occupies residues 1–26; the sequence is MIKINKILSLLIILLIINCNYQFVKA. The next 2 helical transmembrane spans lie at 80–100 and 137–157; these read ILLS…GIIF and VFIL…VFIT. 4 N-linked (GlcNAc...) asparagine glycosylation sites follow: Asn-162, Asn-171, Asn-178, and Asn-195. Transmembrane regions (helical) follow at residues 243 to 263 and 274 to 294; these read IIIV…VSAL and SIAL…HYPI. Residues Asn-315, Asn-332, Asn-351, Asn-396, Asn-405, and Asn-462 are each glycosylated (N-linked (GlcNAc...) asparagine). The helical transmembrane segment at 515–535 threads the bilayer; that stretch reads LLIAPTAVFAILLTGLGITGI.

Its subcellular location is the membrane. In Dictyostelium discoideum (Social amoeba), this protein is Transmembrane protein DDB_G0292058.